Reading from the N-terminus, the 455-residue chain is Oxidative stress induced growth inhibitor homolog osgn-1 (455 aa).

The protein belongs to the OKL38 family. It depends on NADPH as a cofactor.

It is found in the midbody. Its function is as follows. Monooxygenase catalytic activity. Involved in regulation of cytokinesis; promotes rho-1/RhoA activity, probably acting locally at the midbody in late cytokinesis. Monooxygenase activity is required to stabilize structures between primordial germ cells (PGCs), termed intercellular bridges. Dispensable for fertility. In Caenorhabditis elegans, this protein is Oxidative stress induced growth inhibitor homolog osgn-1.